Here is a 298-residue protein sequence, read N- to C-terminus: Serine/threonine-protein kinase 1 (298 aa).

One can recognise a Protein kinase domain in the interval phenylalanine 38 to phenylalanine 276. Residues phenylalanine 45 to phenylalanine 53 and lysine 65 contribute to the ATP site. The active-site Proton acceptor is the aspartate 152.

It belongs to the protein kinase superfamily. Ser/Thr protein kinase family.

It is found in the virion. The protein localises to the host cytoplasm. It catalyses the reaction L-seryl-[protein] + ATP = O-phospho-L-seryl-[protein] + ADP + H(+). It carries out the reaction L-threonyl-[protein] + ATP = O-phospho-L-threonyl-[protein] + ADP + H(+). Functionally, essential for viral replication. It may mediate the virus progression through DNA replication. The polypeptide is Serine/threonine-protein kinase 1 (African swine fever virus (strain Badajoz 1971 Vero-adapted) (Ba71V)).